Reading from the N-terminus, the 1420-residue chain is tRNA (32-2'-O)-methyltransferase regulator TRM732 (1420 aa).

Positions 748 to 754 (RRSGGLP) are required for activity.

The protein belongs to the THADA family. In terms of assembly, interacts with TRM7; for 2'-O-methylation of position 32 in substrate tRNAs.

The protein localises to the cytoplasm. Functionally, together with methyltransferase TRM7, methylates the 2'-O-ribose of nucleotides at position 32 of the anticodon loop of substrate tRNAs. The sequence is that of tRNA (32-2'-O)-methyltransferase regulator TRM732 (TRM732) from Saccharomyces cerevisiae (strain ATCC 204508 / S288c) (Baker's yeast).